Consider the following 548-residue polypeptide: Telomerase Cajal body protein 1 (548 aa).

A disordered region spans residues 1–142; the sequence is MKTLETQPLA…SGEPAAEDEG (142 aa). Positions 15-31 are enriched in low complexity; sequence PSDQDPAPAHPSPHASP. Phosphoserine is present on residues Ser-26, Ser-30, and Ser-54. Ser-64 is modified (phosphoserine; by ATM). Ser-85, Ser-90, Ser-112, and Ser-114 each carry phosphoserine. WD repeat units lie at residues 167–206, 222–267, 272–313, 323–364, 365–405, and 411–450; these read QPEN…YHEG, EGDT…LRAS, NHLD…RDCE, GQSG…ALLG, GHQG…YPLW, and VTTN…NDGK. Thr-489 is modified (phosphothreonine). Ser-491 carries the phosphoserine modification. The interval 526 to 548 is disordered; sequence SIPDDHQGEKGQGGTEGGVGELI. The span at 535-548 shows a compositional bias: gly residues; sequence KGQGGTEGGVGELI.

The protein belongs to the TCAB1 family. Component of the telomerase holoenzyme complex composed of one molecule of TERT, one molecule of WRAP53/TCAB1, two molecules of H/ACA ribonucleoprotein complex subunits DKC1, NOP10, NHP2 and GAR1, and a telomerase RNA template component (TERC). The telomerase holoenzyme complex is associated with TEP1, SMG6/EST1A and POT1. Interacts with the chaperonin-containing T-complex (TRiC) complex; which mediates the folding of WRAP53/TCAB1. Interacts with COIL. Interacts with SMN1. Interacts with RNF8. Interacts with histone H2AX. Phosphorylated at Ser-64 by ATM in response to DNA damage, promoting its interaction with histone H2AX and localization to sites of DNA double-strand breaks. In terms of tissue distribution, expressed in all tissues and cell lines examined.

It localises to the nucleus. Its subcellular location is the cajal body. The protein localises to the chromosome. The protein resides in the telomere. Its function is as follows. RNA chaperone that plays a key role in telomere maintenance and RNA localization to Cajal bodies. Specifically recognizes and binds the Cajal body box (CAB box) present in both small Cajal body RNAs (scaRNAs) and telomerase RNA template component (TERC). Essential component of the telomerase holoenzyme complex, a ribonucleoprotein complex essential for the replication of chromosome termini that elongates telomeres in most eukaryotes. In the telomerase holoenzyme complex, required to stimulate the catalytic activity of the complex. Acts by specifically binding the CAB box of the TERC RNA and controlling the folding of the CR4/CR5 region of the TERC RNA, a critical step for telomerase activity. In addition, also controls telomerase holoenzyme complex localization to Cajal body. During S phase, required for delivery of TERC to telomeres during S phase and for telomerase activity. In addition to its role in telomere maintenance, also required for Cajal body formation, probably by mediating localization of scaRNAs to Cajal bodies. Also plays a role in DNA repair: phosphorylated by ATM in response to DNA damage and relocalizes to sites of DNA double-strand breaks to promote the repair of DNA double-strand breaks. Acts by recruiting the ubiquitin ligase RNF8 to DNA breaks and promote both homologous recombination (HR) and non-homologous end joining (NHEJ). In Homo sapiens (Human), this protein is Telomerase Cajal body protein 1.